Consider the following 283-residue polypeptide: MQVILAKHAGFCFGVKRATQLAFQAANIGSETYTLGPIIHSPQVVQRLEEMGVIPVDNVSEVETGGTIIIRSHGVAAEELEAAVRANLEVVDATCPFVKKAQEHVATLSKEGYDIVVVGDAVHPEVQGIVSYAAGRVYVVSSHKDVERLPRMSKIGVVAQTTQSFEHLHEVVAACLARGGEARVYNTICDATAVRQEEAKKLAGAVDCMVVIGGFNSANTMRLAQICLELLPRTHHVETASQIDEQWFKGVKKVGVTAGASTPKWIIDEVIDRISAIDKDKIS.

Cys-12 contributes to the [4Fe-4S] cluster binding site. Residues His-40 and His-73 each coordinate (2E)-4-hydroxy-3-methylbut-2-enyl diphosphate. Residues His-40 and His-73 each contribute to the dimethylallyl diphosphate site. 2 residues coordinate isopentenyl diphosphate: His-40 and His-73. Cys-95 provides a ligand contact to [4Fe-4S] cluster. (2E)-4-hydroxy-3-methylbut-2-enyl diphosphate is bound at residue His-123. His-123 lines the dimethylallyl diphosphate pocket. Residue His-123 coordinates isopentenyl diphosphate. The Proton donor role is filled by Glu-125. Thr-161 provides a ligand contact to (2E)-4-hydroxy-3-methylbut-2-enyl diphosphate. Cys-189 is a [4Fe-4S] cluster binding site. Positions 217, 219, and 261 each coordinate (2E)-4-hydroxy-3-methylbut-2-enyl diphosphate. Dimethylallyl diphosphate is bound by residues Ser-217, Asn-219, and Ser-261. Residues Ser-217, Asn-219, and Ser-261 each contribute to the isopentenyl diphosphate site.

It belongs to the IspH family. [4Fe-4S] cluster is required as a cofactor.

The catalysed reaction is isopentenyl diphosphate + 2 oxidized [2Fe-2S]-[ferredoxin] + H2O = (2E)-4-hydroxy-3-methylbut-2-enyl diphosphate + 2 reduced [2Fe-2S]-[ferredoxin] + 2 H(+). The enzyme catalyses dimethylallyl diphosphate + 2 oxidized [2Fe-2S]-[ferredoxin] + H2O = (2E)-4-hydroxy-3-methylbut-2-enyl diphosphate + 2 reduced [2Fe-2S]-[ferredoxin] + 2 H(+). Its pathway is isoprenoid biosynthesis; dimethylallyl diphosphate biosynthesis; dimethylallyl diphosphate from (2E)-4-hydroxy-3-methylbutenyl diphosphate: step 1/1. The protein operates within isoprenoid biosynthesis; isopentenyl diphosphate biosynthesis via DXP pathway; isopentenyl diphosphate from 1-deoxy-D-xylulose 5-phosphate: step 6/6. In terms of biological role, catalyzes the conversion of 1-hydroxy-2-methyl-2-(E)-butenyl 4-diphosphate (HMBPP) into a mixture of isopentenyl diphosphate (IPP) and dimethylallyl diphosphate (DMAPP). Acts in the terminal step of the DOXP/MEP pathway for isoprenoid precursor biosynthesis. In Citrifermentans bemidjiense (strain ATCC BAA-1014 / DSM 16622 / JCM 12645 / Bem) (Geobacter bemidjiensis), this protein is 4-hydroxy-3-methylbut-2-enyl diphosphate reductase.